Reading from the N-terminus, the 498-residue chain is Polygalacturonan/rhamnogalacturonan-binding protein YtcQ (498 aa).

The first 22 residues, 1–22 (MGNKWRVLLIVLVLALGGVLAG), serve as a signal peptide directing secretion. Residue C23 is the site of N-palmitoyl cysteine attachment. C23 carries the S-diacylglycerol cysteine lipid modification.

This sequence belongs to the bacterial solute-binding protein 1 family. The complex is probably composed of two ATP-binding proteins (MsmX), two transmembrane proteins (YtcP and YteP) and a solute-binding protein (YtcQ).

Its subcellular location is the cell membrane. Its function is as follows. Involved in pectin degradation. Part of the ABC transporter complex YtcQP-YteP involved in the uptake of polygalacturonan and rhamnogalacturonan type I. This is Polygalacturonan/rhamnogalacturonan-binding protein YtcQ (ytcQ) from Bacillus subtilis (strain 168).